Here is a 6631-residue protein sequence, read N- to C-terminus: Replicase polyprotein 1ab (6631 aa).

Topologically, residues 1 to 1752 are cytoplasmic; that stretch reads MASSLKQGVS…VSSYKIVLCK (1752 aa). 2 Ubiquitin-like domains span residues 675–780 and 1177–1229; these read KTVT…RDYE and CKQK…ILFI. Positions 1005–1181 constitute a Macro domain; it reads VKPATCEKPK…YFDATCKQKT (177 aa). One can recognise a Peptidase C16 domain in the interval 1238–1499; it reads EYYGLDAQKY…AKVVKEDVSN (262 aa). The active-site For PL-PRO activity is the Cys1276. A C4-type; degenerate zinc finger spans residues 1355–1392; it reads CNCGVKSYELRGLEACIQPVRAPNLLHFKTQYSNCPTC. Residues His1439 and Asp1450 each act as for PL-PRO activity in the active site. The helical transmembrane segment at 1753-1773 threads the bilayer; sequence VVFATLLIVWFIYTSNPVVFT. Positions 1753 to 1866 are HD1; the sequence is VVFATLLIVW…KPVAGFVIIC (114 aa). In terms of domain architecture, 3Ecto spans 1771-1835; it reads VFTGIRVLDF…AYSVEQIYKD (65 aa). Residues 1774–1845 lie on the Lumenal side of the membrane; the sequence is GIRVLDFLFE…AASGINFNWN (72 aa). 2 disulfide bridges follow: Cys1787/Cys1813 and Cys1804/Cys1810. A helical transmembrane segment spans residues 1846 to 1866; sequence WLYLVFLILFVKPVAGFVIIC. Over 1867 to 2282 the chain is Cytoplasmic; sequence YCVKYLVLSS…TFKWFMSCFK (416 aa). The tract at residues 1913–2003 is Y1; that stretch reads YVQVHHILYC…KLKRHVKPTA (91 aa). In terms of domain architecture, CoV Nsp3 Y spans 1913–2265; it reads YVQVHHILYC…HTQKLLVEKK (353 aa). Residues His1917, Cys1922, Cys1927, Cys1930, Cys1963, His1966, Cys1970, and Cys1973 each contribute to the Zn(2+) site. The ZF1 stretch occupies residues 1917 to 1930; that stretch reads HHILYCKDVTCEVC. The ZF2 stretch occupies residues 1963–1973; that stretch reads CKRHNWYCRNC. Residues 2004–2106 are Y2; that stretch reads YAYHVVYEAC…ILDQALYEQL (103 aa). Residues 2004–2265 form a coV-Y region; the sequence is YAYHVVYEAC…HTQKLLVEKK (262 aa). The tract at residues 2107-2165 is Y3; the sequence is IVEPVSKSVIDKVCSILSNIISVDTAALNYKAGTLRDALLSITKDEEAVDMAIFCHNHE. Residues 2166–2265 are Y4; it reads VEYTGDGFTN…HTQKLLVEKK (100 aa). Residues 2283–2303 traverse the membrane as a helical segment; it reads WLFVFYILFTACCLGYYYMEM. The HD2 stretch occupies residues 2283–2666; it reads WLFVFYILFT…LACCYLGFIL (384 aa). The Lumenal portion of the chain corresponds to 2304–2561; it reads NKSFVHPMYD…FFTGVNPNIY (258 aa). Residues 2562 to 2582 form a helical membrane-spanning segment; that stretch reads IQLATMFLILVVIVLIFAMVI. Residues 2583–2613 are Cytoplasmic-facing; it reads KFQGVFKAYATIVFTIMLVWVINAFVLCVHS. The chain crosses the membrane as a helical span at residues 2614–2634; it reads YNSVLAVILLVLYCYASMVTS. Over 2635-2645 the chain is Lumenal; it reads RNTAIIMHCWL. A helical membrane pass occupies residues 2646–2666; that stretch reads VFTFGLIVPTWLACCYLGFIL. The Cytoplasmic portion of the chain corresponds to 2667-3098; it reads YMYTPLVFWC…SSFVRKATSW (432 aa). The Nsp4C domain occupies 2686 to 2781; it reads LYDGNEFVGN…RYSIGVSRLQ (96 aa). The Peptidase C30 domain occupies 2782–3088; sequence AGFKKLVSPS…FNQVGGVRLQ (307 aa). Active-site for 3CL-PRO activity residues include His2822 and Cys2924. A helical membrane pass occupies residues 3099-3119; that stretch reads FWSRCVLACFLFVLCAIVLFT. Positions 3099–3319 are HD3; it reads FWSRCVLACF…WLCTCYFGLY (221 aa). The Lumenal portion of the chain corresponds to 3120–3123; it reads AVPL. The helical transmembrane segment at 3124–3144 threads the bilayer; that stretch reads KFYVHAAVILLMAVLFISFTV. At 3145-3153 the chain is on the cytoplasmic side; the sequence is KHVMAYMDT. The chain crosses the membrane as a helical span at residues 3154–3174; that stretch reads FLLPTLITVIIGVCAEVPFIY. The Lumenal portion of the chain corresponds to 3175-3190; it reads NTLISQVVIFLSQWYD. Residues 3191–3211 traverse the membrane as a helical segment; sequence PVVFDTMVPWMLLPLVLYTAF. At 3212–3259 the chain is on the cytoplasmic side; that stretch reads KCVQGCYMNSFNTSLLMLYQFMKLGFVIYTSSNTLTAYTEGNWELFFE. The helical transmembrane segment at 3260-3280 threads the bilayer; sequence LVHTIVLANVSSNSLIGLIVF. Over 3281–3298 the chain is Lumenal; the sequence is KCAKWMLYYCNATYFNNY. Residues 3299–3319 form a helical membrane-spanning segment; that stretch reads VLMAVMVNGIGWLCTCYFGLY. At 3320–6631 the chain is on the cytoplasmic side; it reads WWVNKVFGLT…FTSDSFVCTM (3312 aa). Residues 3382–3464 form the RdRp Nsp7 cofactor domain; sequence SKLSDVKCTT…DILKRSTVLQ (83 aa). A RdRp Nsp8 cofactor domain is found at 3465 to 3674; the sequence is SVTQEFSHIP…GHNKVDVALQ (210 aa). The Nsp9 ssRNA-binding domain maps to 3675–3785; the sequence is NNELMPHGVK…GAISNVVVLQ (111 aa). In terms of domain architecture, ExoN/MTase coactivator spans 3787–3928; it reads KGHETEEVDA…CDSLRQPKPS (142 aa). Zn(2+) is bound by residues Cys3860, Cys3863, His3869, Cys3880, Cys3906, Cys3909, Cys3917, and Cys3919. Zinc fingers lie at residues 3860-3880 and 3906-3919; these read CLYC…DGRC and CTVC…GCQC. Residues 3942–4200 form the NiRAN domain; the sequence is YLNRVRGSSE…APERYFEYDV (259 aa). The 99-residue stretch at 4205 to 4303 folds into the Nsp12 Interface domain; that stretch reads KSYDLLKYDY…MNQDNTMSFS (99 aa). His4234, Cys4240, Cys4245, Cys4249, and Cys4426 together coordinate Zn(2+). One can recognise a Nsp12 RNA-dependent RNA polymerase domain in the interval 4304–4870; the sequence is KMGLSQLMQF…NMYRAPTTLQ (567 aa). Residues 4306–4519 form a rdRp Fingers N-ter region; the sequence is GLSQLMQFVG…HQKILKSIVN (214 aa). The tract at residues 4520-4558 is rdRp Palm N-ter; the sequence is TRNAPVVIGTTKFYGGWDNMLRNLIQGVEDPILMGWDYP. A RdRp catalytic domain is found at 4550–4712; sequence PILMGWDYPK…CYNNTLAKQG (163 aa). The rdRp Fingers C-ter stretch occupies residues 4559-4617; sequence KCDRAMPNLLRIAASLVLARKHTNCCTWSERVYRLYNECAQVLSETVLATGGIYVKPGG. Zn(2+)-binding residues include His4580, Cys4583, and Cys4584. The tract at residues 4618 to 4753 is rdRp Palm C-ter; that stretch reads TSSGDATTAY…EKGPHEFCSQ (136 aa). Active-site residues include Ser4697, Asp4698, and Asp4699. Positions 4754 to 4870 are rdRp Thumb; that stretch reads HTMLVEVDGE…NMYRAPTTLQ (117 aa). Positions 4871–4983 constitute a CV ZBD domain; it reads SCGVCVVCNS…DDFNQLATTN (113 aa). Residues Cys4875, Cys4878, Cys4886, Cys4889, Cys4896, Cys4899, His4903, His4909, Cys4920, Cys4925, Cys4942, and His4945 each contribute to the Zn(2+) site. The (+)RNA virus helicase ATP-binding domain maps to 5127–5307; sequence MVPACFVNNI…MVCVKPDIFL (181 aa). 5152–5159 serves as a coordination point for ATP; that stretch reads GPPGSGKS. The (+)RNA virus helicase C-terminal domain occupies 5308–5479; it reads AKCYRCPKEI…QGTGLFKICN (172 aa). Positions 5541–5755 constitute an ExoN domain; sequence MFITRDEAIR…RCLAINNAFC (215 aa). Residues Asp5559, Glu5561, and Glu5660 contribute to the active site. Zn(2+)-binding residues include Cys5676, Cys5678, Cys5694, His5697, His5725, Cys5729, and His5732. Residues His5736 and Asp5741 contribute to the active site. Cys5747 is a binding site for Zn(2+). The N7-MTase domain occupies 5764–5991; it reads YPHIANEDEV…NLWKSFSALQ (228 aa). Residue 5799 to 5805 participates in S-adenosyl-L-methionine binding; sequence DIGNPKG. The segment at 5879–5893 is gpppA-binding; that stretch reads CNGGSLYVNKHAFHT. Cys5917, Cys5937, Cys5948, and His5951 together coordinate Zn(2+). The Nsp15 N-terminal oligomerization domain occupies 5992 to 6052; the sequence is SIDNIAYNMY…SVAFELYAKR (61 aa). Residues 6053-6168 form the AV-Nsp11N/CoV-Nsp15M domain; that stretch reads NIRTLPNNRI…VYKRVNGAFV (116 aa). Residues 6185 to 6326 form the NendoU domain; sequence EPRSDVERDF…EDGIIKTCYP (142 aa). Residues His6214, His6229, Lys6269, Lys6373, Asp6457, Lys6501, and Glu6534 contribute to the active site. The Nidovirus-type SAM-dependent 2'-O-MTase domain maps to 6329 to 6628; it reads QSAWTCGYNM…NTSFTSDSFV (300 aa).

Belongs to the coronaviruses polyprotein 1ab family. As to quaternary structure, interacts with host PHB and PHB2. Interacts with papain-like protease and non-structural protein 6. In terms of assembly, monomer. Homodimer. Only the homodimer shows catalytic activity. As to quaternary structure, eight copies of nsp7 and eight copies of nsp8 assemble to form a heterohexadecamer dsRNA-encircling ring structure. Eight copies of nsp7 and eight copies of nsp8 assemble to form a heterohexadecamer dsRNA-encircling ring structure. Interacts with ORF6 protein. In terms of assembly, homodimer. As to quaternary structure, homododecamer. Interacts with proofreading exoribonuclease nsp14 and 2'-O-methyltransferase nsp16; these interactions enhance nsp14 and nsp16 enzymatic activities. Interacts with host DDX1 (via C-terminus). Interacts with non-structural protein 10. In terms of assembly, homohexamer. As to quaternary structure, interacts with non-structural protein 10. The cofactor is Mn(2+). It depends on Zn(2+) as a cofactor. Post-translationally, specific enzymatic cleavages in vivo by its own proteases yield mature proteins. 3C-like proteinase nsp5 liberates nsps 6-16 from the polyprotein. Papain-like and 3C-like proteinases are autocatalytically processed. N-glycosylated.

It localises to the host endoplasmic reticulum membrane. It is found in the host cytoplasm. The protein localises to the host perinuclear region. The protein resides in the host endoplasmic reticulum. Its subcellular location is the host endoplasmic reticulum-Golgi intermediate compartment. It carries out the reaction Thiol-dependent hydrolysis of ester, thioester, amide, peptide and isopeptide bonds formed by the C-terminal Gly of ubiquitin (a 76-residue protein attached to proteins as an intracellular targeting signal).. The catalysed reaction is RNA(n) + a ribonucleoside 5'-triphosphate = RNA(n+1) + diphosphate. It catalyses the reaction ATP + H2O = ADP + phosphate + H(+). The enzyme catalyses a 5'-end diphospho-ribonucleoside in mRNA + GTP + H(+) = a 5'-end (5'-triphosphoguanosine)-ribonucleoside in mRNA + diphosphate. It carries out the reaction uridylyl-uridylyl-ribonucleotide-RNA = a 3'-end uridylyl-2',3'-cyclophospho-uridine-RNA + a 5'-end dephospho-ribonucleoside-RNA. The catalysed reaction is a 5'-end (N(7)-methyl 5'-triphosphoguanosine)-ribonucleoside in mRNA + S-adenosyl-L-methionine = a 5'-end (N(7)-methyl 5'-triphosphoguanosine)-(2'-O-methyl-ribonucleoside) in mRNA + S-adenosyl-L-homocysteine + H(+). Its function is as follows. Multifunctional protein involved in the transcription and replication of viral RNAs. Contains the proteinases responsible for the cleavages of the polyprotein. May play a role in the modulation of host cell survival signaling pathway by interacting with host PHB and PHB2. Indeed, these two proteins play a role in maintaining the functional integrity of the mitochondria and protecting cells from various stresses. In terms of biological role, responsible for the cleavages located at the N-terminus of the replicase polyprotein. In addition, PL-PRO possesses a deubiquitinating/deISGylating activity and processes both 'Lys-48'- and 'Lys-63'-linked polyubiquitin chains from cellular substrates. Functionally, plays a role in host membrane rearrangement that leads to creation of cytoplasmic double-membrane vesicles (DMV) necessary for viral replication. Alone is able to induce paired membranes. Coexpression of nsp3 and nsp4 does not result in the formation of DMVs. Its function is as follows. Responsible for the majority of cleavages as it cleaves the C-terminus of replicase polyprotein at 11 sites. Recognizes substrates containing the core sequence [ILMVF]-Q-|-[SGACN]. Inhibited by the substrate-analog Cbz-Val-Asn-Ser-Thr-Leu-Gln-CMK. Forms a hexadecamer with nsp8 (8 subunits of each) that may participate in viral replication by acting as a primase. Alternatively, may synthesize substantially longer products than oligonucleotide primers. In terms of biological role, forms a hexadecamer with nsp7 (8 subunits of each) that may participate in viral replication by acting as a primase. Alternatively, may synthesize substantially longer products than oligonucleotide primers. Functionally, forms a primer, NSP9-pU, which is utilized by the polymerase for the initiation of RNA chains. Interacts with ribosome signal recognition particle RNA (SRP). Together with NSP8, suppress protein integration into the cell membrane, thereby disrupting host immune defenses. Its function is as follows. Plays a pivotal role in viral transcription by stimulating both nsp14 3'-5' exoribonuclease and nsp16 2'-O-methyltransferase activities. Therefore plays an essential role in viral mRNAs cap methylation. RNA-directed RNA polymerase that catalyzes the transcription of viral genomic and subgenomic RNAs. Acts in complex with nsp7 and nsp8 to transcribe both the minus and positive strands of genomic RNA. The kinase-like NiRAN domain of NSP12 attaches one or more nucleotides to the amino terminus of NSP9, forming a covalent RNA-protein intermediate that serves as transcription/replication primer. Subgenomic RNAs (sgRNAs) are formed by discontinuous transcription: The polymerase has the ability to pause at transcription-regulating sequences (TRS) and jump to the leader TRS, resulting in a major deletion. This creates a series of subgenomic RNAs that are replicated, transcribed and translated. In addition, Nsp12 is a subunit of the viral RNA capping enzyme that catalyzes the RNA guanylyltransferase reaction for genomic and sub-genomic RNAs. Subsequently, the NiRAN domain transfers RNA to GDP, and forms the core cap structure GpppA-RNA. In terms of biological role, multi-functional protein with a zinc-binding domain in N-terminus displaying RNA and DNA duplex-unwinding activities with 5' to 3' polarity. Activity of helicase is dependent on magnesium. Functionally, enzyme possessing two different activities: an exoribonuclease activity acting on both ssRNA and dsRNA in a 3' to 5' direction and a N7-guanine methyltransferase activity. Acts as a proofreading exoribonuclease for RNA replication, thereby lowering The sensitivity of the virus to RNA mutagens. Its function is as follows. Plays a role in viral transcription/replication and prevents the simultaneous activation of host cell dsRNA sensors, such as MDA5/IFIH1, OAS, and PKR. Acts by degrading the 5'-polyuridines generated during replication of the poly(A) region of viral genomic and subgenomic RNAs. Catalyzes a two-step reaction in which a 2'3'-cyclic phosphate (2'3'-cP) is first generated by 2'-O transesterification, which is then hydrolyzed to a 3'-phosphate (3'-P). If not degraded, poly(U) RNA would hybridize with poly(A) RNA tails and activate host dsRNA sensors. Methyltransferase that mediates mRNA cap 2'-O-ribose methylation to the 5'-cap structure of viral mRNAs. N7-methyl guanosine cap is a prerequisite for binding of nsp16. Therefore plays an essential role in viral mRNAs cap methylation which is essential to evade immune system. The polypeptide is Replicase polyprotein 1ab (rep) (Gallus gallus (Chicken)).